Reading from the N-terminus, the 232-residue chain is tRNA1(Val) (adenine(37)-N6)-methyltransferase (232 aa).

It belongs to the methyltransferase superfamily. tRNA (adenine-N(6)-)-methyltransferase family.

Its subcellular location is the cytoplasm. It catalyses the reaction adenosine(37) in tRNA1(Val) + S-adenosyl-L-methionine = N(6)-methyladenosine(37) in tRNA1(Val) + S-adenosyl-L-homocysteine + H(+). Functionally, specifically methylates the adenine in position 37 of tRNA(1)(Val) (anticodon cmo5UAC). This chain is tRNA1(Val) (adenine(37)-N6)-methyltransferase, found in Pseudoalteromonas translucida (strain TAC 125).